Reading from the N-terminus, the 489-residue chain is Neuropeptide CCHamide-2 receptor (489 aa).

Residues 1-74 are Extracellular-facing; the sequence is MYASLMDVGQ…DRPETYIVTV (74 aa). N-linked (GlcNAc...) asparagine glycosylation is found at asparagine 25 and asparagine 50. Residues 75–95 traverse the membrane as a helical segment; it reads LYTLIFIVGVLGNGTLVIIFF. Residues 96–107 lie on the Cytoplasmic side of the membrane; that stretch reads RHRSMRNIPNTY. The chain crosses the membrane as a helical span at residues 108 to 128; the sequence is ILSLALADLLVILVCVPVATI. Residues 129–143 are Extracellular-facing; that stretch reads VYTQESWPFERNMCR. An intrachain disulfide couples cysteine 142 to cysteine 225. Residues 144 to 164 form a helical membrane-spanning segment; the sequence is ISEFFKDISIGVSVFTLTALS. Topologically, residues 165 to 184 are cytoplasmic; that stretch reads GERYCAIVNPLRKLQTKPLT. Residues 185–205 form a helical membrane-spanning segment; that stretch reads VFTAVMIWILAILLGMPSVLF. Residues 206 to 235 lie on the Extracellular side of the membrane; sequence SDIKSYPVFTATGNMTIEVCSPFRDPEYAK. An N-linked (GlcNAc...) asparagine glycan is attached at asparagine 219. Residues 236–256 traverse the membrane as a helical segment; it reads FMVAGKALVYYLLPLSIIGAL. The Cytoplasmic segment spans residues 257-293; sequence YIMMAKRLHMSARNMPGEQQSMQSRTQARARLHVARM. A helical membrane pass occupies residues 294–314; the sequence is VVAFVVVFFICFFPYHVFELW. Over 315–333 the chain is Extracellular; it reads YHFYPTAEEDFDEFWNVLR. The chain crosses the membrane as a helical span at residues 334 to 354; the sequence is IVGFCTSFLNSCVNPVALYCV. The Cytoplasmic portion of the chain corresponds to 355–489; it reads SGVFRQHFNR…NRYESGVMRY (135 aa). The tract at residues 438-468 is disordered; the sequence is SFHRQDSMPLQHGNAHGGGAGGGSSGLGAGG. Gly residues predominate over residues 452–468; that stretch reads AHGGGAGGGSSGLGAGG.

It belongs to the G-protein coupled receptor 1 family. Highly expressed in larval brain. Also highly expressed in adult brain with very low levels in larval and adult gut.

The protein localises to the cell membrane. In terms of biological role, receptor for the neuropeptide CCHamide-2. The protein is Neuropeptide CCHamide-2 receptor of Drosophila melanogaster (Fruit fly).